Reading from the N-terminus, the 57-residue chain is Preprotein translocase subunit SecG (57 aa).

Residues 1–33 lie on the Cytoplasmic side of the membrane; that stretch reads MARRRKYEGLNPFVAAGLIKFSEEGELERIKLN. A helical membrane pass occupies residues 34 to 55; that stretch reads PRTAILVSITVIIAILVLNILH. The Extracellular portion of the chain corresponds to 56–57; that stretch reads PL.

This sequence belongs to the SEC61-beta family. In terms of assembly, component of the protein translocase complex. Heterotrimer consisting of alpha (SecY), beta (SecG) and gamma (SecE) subunits. Can form oligomers of the heterotrimer.

It localises to the cell membrane. Involved in protein export. The function of the beta subunit is unknown, but it may be involved in stabilization of the trimeric complex. The protein is Preprotein translocase subunit SecG of Pyrobaculum islandicum (strain DSM 4184 / JCM 9189 / GEO3).